The chain runs to 367 residues: Biotin synthase (367 aa).

One can recognise a Radical SAM core domain in the interval 73–308; that stretch reads CCGNTVDLCS…EQIIRYAGGR (236 aa). C91, C95, and C98 together coordinate [4Fe-4S] cluster. Residues C136, C173, C233, and R303 each coordinate [2Fe-2S] cluster.

The protein belongs to the radical SAM superfamily. Biotin synthase family. As to quaternary structure, homodimer. Requires [4Fe-4S] cluster as cofactor. [2Fe-2S] cluster serves as cofactor.

It carries out the reaction (4R,5S)-dethiobiotin + (sulfur carrier)-SH + 2 reduced [2Fe-2S]-[ferredoxin] + 2 S-adenosyl-L-methionine = (sulfur carrier)-H + biotin + 2 5'-deoxyadenosine + 2 L-methionine + 2 oxidized [2Fe-2S]-[ferredoxin]. Its pathway is cofactor biosynthesis; biotin biosynthesis; biotin from 7,8-diaminononanoate: step 2/2. Its function is as follows. Catalyzes the conversion of dethiobiotin (DTB) to biotin by the insertion of a sulfur atom into dethiobiotin via a radical-based mechanism. This chain is Biotin synthase, found in Picosynechococcus sp. (strain ATCC 27264 / PCC 7002 / PR-6) (Agmenellum quadruplicatum).